The primary structure comprises 691 residues: ATP-dependent RNA helicase MRH4, mitochondrial (691 aa).

The N-terminal 31 residues, 1 to 31, are a transit peptide targeting the mitochondrion; sequence MLIGQVSRLSAIPPLALQHTLRPLHSSSVLA. The interval 31–148 is disordered; sequence AAGGKRPKQS…ATMPPNLTPR (118 aa). Polar residues predominate over residues 39–49; sequence QSPSHSRNSPR. Over residues 50–68 the composition is skewed to basic and acidic residues; sequence QKPDWEKRGSNRGRSEQPR. The segment covering 94-103 has biased composition (low complexity); it reads SDSSSGSSAS. A compositionally biased stretch (polar residues) spans 111–126; it reads VPTSSRRLLPFSSSDT. The Q motif signature appears at 183–213; it reads RTFDDFGLEEGLVKSLKGLYGEDGKTTPIET. The Helicase ATP-binding domain maps to 225 to 433; sequence ASAPIGSQRV…TTNPFFTKKE (209 aa). 238–245 provides a ligand contact to ATP; the sequence is AETGSGKT. Positions 382-385 match the DEAD box motif; the sequence is DEAD. A Helicase C-terminal domain is found at 474 to 691; it reads TLAEDAKAAK…VGAMGKRVRT (218 aa). A disordered region spans residues 644–667; the sequence is LGEGAKNNKGGKGQGPLKKDGKTA.

This sequence belongs to the DEAD box helicase family. MRH4 subfamily.

The protein localises to the mitochondrion. It carries out the reaction ATP + H2O = ADP + phosphate + H(+). Functionally, ATP-binding RNA helicase involved in mitochondrial RNA metabolism. Required for maintenance of mitochondrial DNA. The chain is ATP-dependent RNA helicase MRH4, mitochondrial (MRH4) from Cryptococcus neoformans var. neoformans serotype D (strain JEC21 / ATCC MYA-565) (Filobasidiella neoformans).